A 493-amino-acid polypeptide reads, in one-letter code: Cardiolipin synthase 1 (493 aa).

A run of 2 helical transmembrane segments spans residues 13-33 (FTII…IIIF) and 45-65 (WAWL…YLFF). PLD phosphodiesterase domains lie at 228 to 255 (MNNR…GDEY) and 406 to 433 (ENGF…DFRS). Catalysis depends on residues His-233, Lys-235, Asp-240, His-411, Lys-413, and Asp-418.

This sequence belongs to the phospholipase D family. Cardiolipin synthase subfamily.

It is found in the cell membrane. It carries out the reaction 2 a 1,2-diacyl-sn-glycero-3-phospho-(1'-sn-glycerol) = a cardiolipin + glycerol. In terms of biological role, catalyzes the reversible phosphatidyl group transfer from one phosphatidylglycerol molecule to another to form cardiolipin (CL) (diphosphatidylglycerol) and glycerol. This is Cardiolipin synthase 1 (cls1) from Staphylococcus aureus (strain COL).